The following is a 476-amino-acid chain: Arginine biosynthesis bifunctional protein ArgJ, mitochondrial (476 aa).

The substrate site is built by Thr204, Lys233, Thr244, Glu331, Asn471, and Thr476. Thr244 acts as the Nucleophile in catalysis.

Belongs to the ArgJ family. As to quaternary structure, heterodimer of an alpha and a beta chain. In terms of processing, the alpha and beta chains are autoproteolytically processed from a single precursor protein within the mitochondrion.

The protein resides in the mitochondrion matrix. It catalyses the reaction N(2)-acetyl-L-ornithine + L-glutamate = N-acetyl-L-glutamate + L-ornithine. It carries out the reaction L-glutamate + acetyl-CoA = N-acetyl-L-glutamate + CoA + H(+). The protein operates within amino-acid biosynthesis; L-arginine biosynthesis; L-ornithine and N-acetyl-L-glutamate from L-glutamate and N(2)-acetyl-L-ornithine (cyclic): step 1/1. It participates in amino-acid biosynthesis; L-arginine biosynthesis; N(2)-acetyl-L-ornithine from L-glutamate: step 1/4. Catalyzes two activities which are involved in the cyclic version of arginine biosynthesis: the synthesis of acetylglutamate from glutamate and acetyl-CoA, and of ornithine by transacetylation between acetylornithine and glutamate. The chain is Arginine biosynthesis bifunctional protein ArgJ, mitochondrial from Arthroderma otae (strain ATCC MYA-4605 / CBS 113480) (Microsporum canis).